The primary structure comprises 168 residues: Thiol peroxidase (168 aa).

One can recognise a Thioredoxin domain in the interval 19-168; it reads PQAGSKAQAF…YDAALNVLKA (150 aa). Catalysis depends on Cys61, which acts as the Cysteine sulfenic acid (-SOH) intermediate. Cysteines 61 and 95 form a disulfide.

The protein belongs to the peroxiredoxin family. Tpx subfamily. In terms of assembly, homodimer.

The catalysed reaction is a hydroperoxide + [thioredoxin]-dithiol = an alcohol + [thioredoxin]-disulfide + H2O. Functionally, thiol-specific peroxidase that catalyzes the reduction of hydrogen peroxide and organic hydroperoxides to water and alcohols, respectively. Plays a role in cell protection against oxidative stress by detoxifying peroxides. The protein is Thiol peroxidase of Salmonella typhi.